The chain runs to 631 residues: Mitochondrial Rho GTPase 1 (631 aa).

Residues 1–605 (MPAGRGRPLR…TQADLKSSTF (605 aa)) lie on the Cytoplasmic side of the membrane. In terms of domain architecture, Miro 1 spans 15–181 (KKDVRILLVG…FYYAQKAVLH (167 aa)). GTP contacts are provided by Arg-27, Gly-29, Lys-30, Thr-31, and Ser-32. Thr-31 provides a ligand contact to Mg(2+). Mg(2+) is bound by residues Pro-48 and Asp-70. Ser-72 serves as a coordination point for GTP. Lys-105 is modified (N6-acetyllysine). Positions 131, 132, 134, 162, and 163 each coordinate GTP. Lys-166 participates in a covalent cross-link: Glycyl lysine isopeptide (Lys-Gly) (interchain with G-Cter in ubiquitin). The 36-residue stretch at 197–232 (ACIKALTRIFKISDQDNDGTLNDAELNFFQRICFNT) folds into the EF-hand 1 domain. Ca(2+) contacts are provided by Asp-210, Asp-212, Asp-214, Thr-216, and Glu-221. Lys-248 participates in a covalent cross-link: Glycyl lysine isopeptide (Lys-Gly) (interchain with G-Cter in ubiquitin). The EF-hand 2 domain maps to 317–352 (HAYLFLQSTFDKHDLDRDCALSPDELKDLFKVFPYI). The Ca(2+) site is built by Asp-330, Asp-332, Asp-334, Ala-336, and Glu-341. A Miro 2 domain is found at 429–592 (RNVFRCNVIG…FVKLTTMAMY (164 aa)). Asn-441, Cys-442, Gly-443, Lys-444, Ser-445, Gly-446, Lys-460, Lys-541, Asp-543, Thr-571, and Cys-572 together coordinate GTP. Asn-441 lines the Mg(2+) pocket. Residue Lys-585 forms a Glycyl lysine isopeptide (Lys-Gly) (interchain with G-Cter in ubiquitin) linkage. The helical; Anchor for type IV membrane protein transmembrane segment at 606-628 (WLRASFGATVFAVLGFAMYKALL) threads the bilayer. Over 629–631 (KQR) the chain is Mitochondrial intermembrane.

It belongs to the mitochondrial Rho GTPase family. As to quaternary structure, homodimer. Interacts with the kinesin-binding proteins TRAK1/OIP106 and TRAK2/GRIF1, forming a link between mitochondria and the trafficking apparatus of the microtubules. Interacts with RAP1GDS1. Interacts with ARMCX1. Found in a complex with KIF5B, OGT, RHOT2 and TRAK1. In terms of processing, ubiquitinated by PRKN during mitophagy, leading to its degradation and enhancement of mitophagy. Deubiquitinated by USP30. Acetylation on Lys-105 decreases sensitivity of mitochondrial transport to elevated Ca(2+) levels, increases mitochondrial transport and promotes axon growth. Deacetylated by HDAC6 which blocks mitochondrial transport and mediates axon growth inhibition.

The protein resides in the mitochondrion outer membrane. It catalyses the reaction GTP + H2O = GDP + phosphate + H(+). The catalysed reaction is ATP + H2O = ADP + phosphate + H(+). The enzyme catalyses UTP + H2O = UDP + phosphate + H(+). In terms of biological role, atypical mitochondrial nucleoside-triphosphatase (NTPase) involved in mitochondrial trafficking. Probably involved in control of anterograde transport of mitochondria and their subcellular distribution. Promotes mitochondrial fission during high calcium conditions. Can hydrolyze GTP, ATP and UTP. This chain is Mitochondrial Rho GTPase 1 (RHOT1), found in Bos taurus (Bovine).